We begin with the raw amino-acid sequence, 1103 residues long: Voltage-dependent calcium channel subunit alpha-2/delta-1 (1103 aa).

An N-terminal signal peptide occupies residues 1–24; the sequence is MAAGCLLALTLTLFQSLLIGPSSE. Residues 25–1073 are Extracellular-facing; that stretch reads EPFPSAVTIK…VLEDYTDCGG (1049 aa). N-linked (GlcNAc...) asparagine glycosylation occurs at Asn92. Ser119 is subject to Phosphoserine. N-linked (GlcNAc...) asparagine glycosylation is found at Asn136 and Asn184. Residues 253-430 form the VWFA domain; that stretch reads DMLILVDVSG…INTQEYLDVL (178 aa). 3 residues coordinate a divalent metal cation: Asp259, Ser261, and Ser263. Positions 259–263 match the MIDAS-like motif motif; that stretch reads DVSGS. 13 N-linked (GlcNAc...) asparagine glycosylation sites follow: Asn324, Asn348, Asn468, Asn475, Asn604, Asn613, Asn675, Asn781, Asn824, Asn888, Asn895, Asn985, and Asn998. An intrachain disulfide couples Cys404 to Cys1059. The Cache domain occupies 446-556; that stretch reads WTNVYLDALE…NIQNPKSQEP (111 aa). The helical transmembrane segment at 1074–1094 threads the bilayer; sequence VSGLNPSLWYIIGIQFLLLWL. Residues 1095–1103 lie on the Cytoplasmic side of the membrane; sequence VSGSTHRLL.

It belongs to the calcium channel subunit alpha-2/delta family. Dimer formed of alpha-2-1 and delta-1 chains; disulfide-linked. Voltage-dependent calcium channels are multisubunit complexes, consisting of alpha-1 (CACNA1), alpha-2 (CACNA2D), beta (CACNB) and delta (CACNA2D) subunits in a 1:1:1:1 ratio. Proteolytically processed into subunits alpha-2-1 and delta-1 that are disulfide-linked. As to expression, isoform 1 is expressed in skeletal muscle. Isoform 2 is expressed in the central nervous system. Isoform 2, isoform 4 and isoform 5 are expressed in neuroblastoma cells. Isoform 3, isoform 4 and isoform 5 are expressed in the aorta.

Its subcellular location is the membrane. The protein resides in the cell membrane. Functionally, the alpha-2/delta subunit of voltage-dependent calcium channels regulates calcium current density and activation/inactivation kinetics of the calcium channel. Plays an important role in excitation-contraction coupling. The protein is Voltage-dependent calcium channel subunit alpha-2/delta-1 (CACNA2D1) of Homo sapiens (Human).